The sequence spans 474 residues: Glycogen synthase (474 aa).

K15 lines the ADP-alpha-D-glucose pocket.

It belongs to the glycosyltransferase 1 family. Bacterial/plant glycogen synthase subfamily.

The enzyme catalyses [(1-&gt;4)-alpha-D-glucosyl](n) + ADP-alpha-D-glucose = [(1-&gt;4)-alpha-D-glucosyl](n+1) + ADP + H(+). The protein operates within glycan biosynthesis; glycogen biosynthesis. Its function is as follows. Synthesizes alpha-1,4-glucan chains using ADP-glucose. This is Glycogen synthase from Finegoldia magna (strain ATCC 29328 / DSM 20472 / WAL 2508) (Peptostreptococcus magnus).